The chain runs to 336 residues: tRNA N6-adenosine threonylcarbamoyltransferase (336 aa).

Residues H114 and H118 each coordinate Fe cation. Substrate-binding positions include 136–140, D169, G182, D186, and N275; that span reads LVSGG. D301 contacts Fe cation.

It belongs to the KAE1 / TsaD family. It depends on Fe(2+) as a cofactor.

It is found in the cytoplasm. It carries out the reaction L-threonylcarbamoyladenylate + adenosine(37) in tRNA = N(6)-L-threonylcarbamoyladenosine(37) in tRNA + AMP + H(+). Functionally, required for the formation of a threonylcarbamoyl group on adenosine at position 37 (t(6)A37) in tRNAs that read codons beginning with adenine. Is involved in the transfer of the threonylcarbamoyl moiety of threonylcarbamoyl-AMP (TC-AMP) to the N6 group of A37, together with TsaE and TsaB. TsaD likely plays a direct catalytic role in this reaction. The protein is tRNA N6-adenosine threonylcarbamoyltransferase of Streptococcus gordonii (strain Challis / ATCC 35105 / BCRC 15272 / CH1 / DL1 / V288).